Consider the following 839-residue polypeptide: Translation initiation factor IF-2 (839 aa).

Composition is skewed to basic and acidic residues over residues 1 to 12 (MSDNEIKNETPK) and 57 to 67 (AEAKAQEKQAA). 2 disordered regions span residues 1-21 (MSDN…RRTK) and 57-244 (AEAK…GASL). Residues 68–90 (EKAAQAQTEAKAQTEQACTTKKT) show a composition bias toward low complexity. Composition is skewed to basic and acidic residues over residues 104–167 (PKTE…REET), 185–199 (READ…EGNR), and 212–233 (GGRE…DIKG). The tr-type G domain maps to 338 to 508 (TRAPVVTIMG…ILQSEVLELT (171 aa)). The G1 stretch occupies residues 347-354 (GHVDHGKT). Position 347-354 (347-354 (GHVDHGKT)) interacts with GTP. Residues 372-376 (GITQH) are G2. The interval 394–397 (DTPG) is G3. Residues 394–398 (DTPGH) and 448–451 (NKID) each bind GTP. Residues 448–451 (NKID) form a G4 region. A G5 region spans residues 484 to 486 (SAK).

It belongs to the TRAFAC class translation factor GTPase superfamily. Classic translation factor GTPase family. IF-2 subfamily.

It is found in the cytoplasm. Functionally, one of the essential components for the initiation of protein synthesis. Protects formylmethionyl-tRNA from spontaneous hydrolysis and promotes its binding to the 30S ribosomal subunits. Also involved in the hydrolysis of GTP during the formation of the 70S ribosomal complex. The chain is Translation initiation factor IF-2 from Haemophilus ducreyi (strain 35000HP / ATCC 700724).